The primary structure comprises 159 residues: MSQFTHINASGEANMVDVSAKAETVREARAEAFVHMAPETLQLIVSGQHHKGDVFATARIAGIQAAKKTWDLIPLCHPLLLSKVEVQLEAIEAENKVRIESVCKLAGKTGVEMEALTAASVAALTIYDMCKAVQKDMVIGPVRLLEKTGGKSGHFKVEA.

Substrate contacts are provided by residues leucine 75–histidine 77 and methionine 113–glutamate 114. Residue aspartate 128 is part of the active site.

This sequence belongs to the MoaC family. Homohexamer; trimer of dimers.

It catalyses the reaction (8S)-3',8-cyclo-7,8-dihydroguanosine 5'-triphosphate = cyclic pyranopterin phosphate + diphosphate. The protein operates within cofactor biosynthesis; molybdopterin biosynthesis. Functionally, catalyzes the conversion of (8S)-3',8-cyclo-7,8-dihydroguanosine 5'-triphosphate to cyclic pyranopterin monophosphate (cPMP). The polypeptide is Cyclic pyranopterin monophosphate synthase (Vibrio vulnificus (strain YJ016)).